Consider the following 244-residue polypeptide: Phosphoribosyl isomerase A (244 aa).

Residue Asp10 is the Proton acceptor of the active site. Asp129 (proton donor) is an active-site residue.

It belongs to the HisA/HisF family.

It is found in the cytoplasm. The enzyme catalyses 1-(5-phospho-beta-D-ribosyl)-5-[(5-phospho-beta-D-ribosylamino)methylideneamino]imidazole-4-carboxamide = 5-[(5-phospho-1-deoxy-D-ribulos-1-ylimino)methylamino]-1-(5-phospho-beta-D-ribosyl)imidazole-4-carboxamide. It catalyses the reaction N-(5-phospho-beta-D-ribosyl)anthranilate = 1-(2-carboxyphenylamino)-1-deoxy-D-ribulose 5-phosphate. Its pathway is amino-acid biosynthesis; L-histidine biosynthesis; L-histidine from 5-phospho-alpha-D-ribose 1-diphosphate: step 4/9. It participates in amino-acid biosynthesis; L-tryptophan biosynthesis; L-tryptophan from chorismate: step 3/5. Involved in both the histidine and tryptophan biosynthetic pathways. The polypeptide is Phosphoribosyl isomerase A (priA) (Mycobacterium leprae (strain TN)).